Here is a 297-residue protein sequence, read N- to C-terminus: MTGFGATPDFNEGSKINASKNQQDEGKMFIGGLSWDTSKKDLTEYLSRFGEVVDCTIKTDPVTGRSRGFGFVLFKDAVSVDKVLETKEHKLDGKLIDPKRAKALKGKEPPKKVFVGGLSPETTEEQIKQYFGGFGEIENIELPMDTKTNERRGFCFVTYTGEEPVKKLLESRFHQIGTGKCEIKVAQPKEVYRQQQQKQQKGGRGAATGRGGARGRGRGQGWNQGYSNYYDQNYGSYGNNGSYADQGYNNSYSGYDYSGYNYGSYGYNQGYTDYSGQQSTYGKARGGGNHQNNYQPY.

Residues 1–21 form a disordered region; it reads MTGFGATPDFNEGSKINASKN. RRM domains follow at residues 26–108 and 111–190; these read GKMF…KGKE and KKVF…QPKE. A disordered region spans residues 192–224; the sequence is YRQQQQKQQKGGRGAATGRGGARGRGRGQGWNQ. The span at 202–222 shows a compositional bias: gly residues; the sequence is GGRGAATGRGGARGRGRGQGW.

The protein localises to the nucleus. It localises to the cytoplasm. Functionally, acts as a transcriptional regulator. Binds DNA and RNA. This is Heterogeneous nuclear ribonucleoprotein D-like (hnrnpdl) from Xenopus tropicalis (Western clawed frog).